The primary structure comprises 342 residues: MITPQQAIERLISNNELFYDEMTDLMRQMMSGKVPPEQIAAILTGLRIKVETVSEITAAAAVMCEFASKVPLEDADGLVDIVGTGGDGAKTFNISTTSMFVAAAAGAKVAKHGGRSVSSSSGAADVMEQMGANLNLTPEQIAQSIRQTGIGFMFAPNHHSAMRHVAPVRRSLGFRSIFNILGPLTNPAGAPNQLLGVFHTDLCGILSRVLQQLGSKHVLVVCGEGGLDEITLTGKTRVAELKDGKISEYDIRPEDFGIETRRNLDEIKVANTQESLLKMNEVLDGKEGAARDIVLLNTAAALYAGNIAASLSDGISAAREGIDSGRAKAKKEEFVGFTRQFA.

5-phospho-alpha-D-ribose 1-diphosphate contacts are provided by residues glycine 83, 86-87, threonine 91, 93-96, 111-119, and alanine 123; these read GD, NIST, and KHGGRSVSS. Glycine 83 contacts anthranilate. Serine 95 lines the Mg(2+) pocket. Position 169 (arginine 169) interacts with anthranilate. Aspartate 228 and glutamate 229 together coordinate Mg(2+).

This sequence belongs to the anthranilate phosphoribosyltransferase family. Homodimer. The cofactor is Mg(2+).

The enzyme catalyses N-(5-phospho-beta-D-ribosyl)anthranilate + diphosphate = 5-phospho-alpha-D-ribose 1-diphosphate + anthranilate. It participates in amino-acid biosynthesis; L-tryptophan biosynthesis; L-tryptophan from chorismate: step 2/5. Functionally, catalyzes the transfer of the phosphoribosyl group of 5-phosphorylribose-1-pyrophosphate (PRPP) to anthranilate to yield N-(5'-phosphoribosyl)-anthranilate (PRA). The polypeptide is Anthranilate phosphoribosyltransferase (Neisseria gonorrhoeae (strain ATCC 700825 / FA 1090)).